The primary structure comprises 397 residues: Phosphoglycerate transport regulatory protein PgtC (397 aa).

The N-terminal stretch at 1-24 (MFGSCQAYSRELVMATTFSPSATA) is a signal peptide. A helical membrane pass occupies residues 102-117 (TSVAVAVSGFGLLINR).

It localises to the cell membrane. Its function is as follows. Required for pgtP expression, it may act jointly with the PgtA/PgtB signaling proteins. In Salmonella typhi, this protein is Phosphoglycerate transport regulatory protein PgtC (pgtC).